Consider the following 424-residue polypeptide: UPF0229 protein YPTS_2141 (424 aa).

Positions 84-109 are disordered; sequence TNDRVDRPQGGGGGGSGQGNAGKDGE. Gly residues predominate over residues 92-105; that stretch reads QGGGGGGSGQGNAG.

This sequence belongs to the UPF0229 family.

The polypeptide is UPF0229 protein YPTS_2141 (Yersinia pseudotuberculosis serotype IB (strain PB1/+)).